A 181-amino-acid polypeptide reads, in one-letter code: ATP synthase subunit delta (181 aa).

The protein belongs to the ATPase delta chain family. In terms of assembly, F-type ATPases have 2 components, F(1) - the catalytic core - and F(0) - the membrane proton channel. F(1) has five subunits: alpha(3), beta(3), gamma(1), delta(1), epsilon(1). F(0) has three main subunits: a(1), b(2) and c(10-14). The alpha and beta chains form an alternating ring which encloses part of the gamma chain. F(1) is attached to F(0) by a central stalk formed by the gamma and epsilon chains, while a peripheral stalk is formed by the delta and b chains.

The protein localises to the cell inner membrane. Functionally, f(1)F(0) ATP synthase produces ATP from ADP in the presence of a proton or sodium gradient. F-type ATPases consist of two structural domains, F(1) containing the extramembraneous catalytic core and F(0) containing the membrane proton channel, linked together by a central stalk and a peripheral stalk. During catalysis, ATP synthesis in the catalytic domain of F(1) is coupled via a rotary mechanism of the central stalk subunits to proton translocation. Its function is as follows. This protein is part of the stalk that links CF(0) to CF(1). It either transmits conformational changes from CF(0) to CF(1) or is implicated in proton conduction. In Cupriavidus taiwanensis (strain DSM 17343 / BCRC 17206 / CCUG 44338 / CIP 107171 / LMG 19424 / R1) (Ralstonia taiwanensis (strain LMG 19424)), this protein is ATP synthase subunit delta.